The primary structure comprises 343 residues: Galactoside alpha-(1,2)-fucosyltransferase 2 (343 aa).

The Cytoplasmic portion of the chain corresponds to 1–14 (MLVVQMPFSFPMAH). The helical; Signal-anchor for type II membrane protein transmembrane segment at 15-28 (FILFVFTVSTIFHV) threads the bilayer. The Lumenal segment spans residues 29 to 343 (QQRLAKIQAM…AADLSPLLKH (315 aa)). N-linked (GlcNAc...) asparagine glycosylation is found at Asn188, Asn282, and Asn308.

The protein belongs to the glycosyltransferase 11 family.

The protein localises to the golgi apparatus. It is found in the golgi stack membrane. It carries out the reaction a beta-D-galactosyl-(1-&gt;3)-N-acetyl-beta-D-glucosaminyl derivative + GDP-beta-L-fucose = an alpha-L-Fuc-(1-&gt;2)-beta-D-Gal-(1-&gt;3)-beta-D-GlcNAc derivative + GDP + H(+). It catalyses the reaction a beta-D-galactosyl-(1-&gt;4)-N-acetyl-beta-D-glucosaminyl derivative + GDP-beta-L-fucose = an alpha-L-Fuc-(1-&gt;2)-beta-D-Gal-(1-&gt;4)-beta-D-GlcNAc derivative + GDP + H(+). The catalysed reaction is a neolactoside nLc4Cer + GDP-beta-L-fucose = a neolactoside IV(2)-alpha-Fuc-nLc4Cer + GDP + H(+). The enzyme catalyses a neolactoside nLc4Cer(d18:1(4E)) + GDP-beta-L-fucose = a neolactoside IV(2)-alpha-Fuc-nLc4Cer(d18:1(4E)) + GDP + H(+). It carries out the reaction a ganglioside GM1 + GDP-beta-L-fucose = a ganglioside Fuc-GM1 + GDP + H(+). It catalyses the reaction a ganglioside GA1 + GDP-beta-L-fucose = a ganglioside Fuc-GA1 + GDP + H(+). The catalysed reaction is Lc4Cer + GDP-beta-L-fucose = alpha-L-fucosyl-(1-&gt;2)-beta-D-galactosyl-(1-&gt;3)-N-acetyl-beta-D-glucosaminyl-(1-&gt;3)-beta-D-galactosyl-(1-&gt;4)-beta-D-glucosyl-(1&lt;-&gt;1')-ceramide + GDP + H(+). The enzyme catalyses a beta-D-Gal-(1-&gt;3)-beta-D-GlcNAc-(1-&gt;3)-beta-D-Gal-(1-&gt;4)-beta-D-Glc-(1&lt;-&gt;1')-Cer(d18:1(4E)) + GDP-beta-L-fucose = alpha-L-fucosyl-(1-&gt;2)- beta-D-galactosyl-(1-&gt;3)-N-acetyl-beta-D-glucosaminyl-(1-&gt;3)-beta-D-galactosyl-(1-&gt;4)-beta-D-glucosyl-(1&lt;-&gt;1')-N-acylsphing-4-enine + GDP + H(+). It carries out the reaction a ganglioside GD1b + GDP-beta-L-fucose = a ganglioside Fuc-GD1b + GDP + H(+). It catalyses the reaction a ganglioside GM1 (d18:1(4E)) + GDP-beta-L-fucose = a ganglioside Fuc-GM1 (d18:1(4E)) + GDP + H(+). The catalysed reaction is a globoside GalGb4Cer (d18:1(4E)) + GDP-beta-L-fucose = a globoside Globo-H (d18:1(4E)) + GDP + H(+). The enzyme catalyses a lactoside III(4)-a-Fuc-Lc4Cer + GDP-beta-L-fucose = a lactoside IV(2),III(4)-a-[Fuc]2-Lc4Cer + GDP + H(+). It carries out the reaction beta-D-galactosyl-(1-&gt;3)-N-acetyl-D-galactosamine + GDP-beta-L-fucose = alpha-L-fucosyl-(1-&gt;2)-beta-D-galactosyl-(1-&gt;3)-N-acetyl-D-galactosamine + GDP + H(+). It participates in protein modification; protein glycosylation. In terms of biological role, catalyzes the transfer of L-fucose, from a guanosine diphosphate-beta-L-fucose, to the terminal galactose on both O- and N-linked glycans chains of cell surface glycoproteins and glycolipids and the resulting epitope regulates several processes such as cell-cell interaction including host-microbe interaction, cell surface expression and cell proliferation. Preferentially fucosylates gangliosides GA1 and GM1 in the antrum, cecum and colon and in the female reproductive organs. Fucosylated host glycoproteins or glycolipids mediate interaction with intestinal microbiota influencing its composition. Creates a soluble precursor oligosaccharide FuC-alpha ((1,2)Galbeta-) called the H antigen which is an essential substrate for the final step in the soluble ABO blood group antigen synthesis pathway. This chain is Galactoside alpha-(1,2)-fucosyltransferase 2, found in Gorilla gorilla gorilla (Western lowland gorilla).